Reading from the N-terminus, the 556-residue chain is Arginine--tRNA ligase (556 aa).

A 'HIGH' region motif is present at residues 130 to 140 (ANPTGPIHLGG).

The protein belongs to the class-I aminoacyl-tRNA synthetase family. As to quaternary structure, monomer.

It is found in the cytoplasm. It carries out the reaction tRNA(Arg) + L-arginine + ATP = L-arginyl-tRNA(Arg) + AMP + diphosphate. This chain is Arginine--tRNA ligase, found in Corynebacterium jeikeium (strain K411).